The following is a 343-amino-acid chain: Adenine deaminase (343 aa).

Zn(2+)-binding residues include His17, His19, and His197. Glu200 acts as the Proton donor in catalysis. Residue Asp278 participates in Zn(2+) binding. Asp279 contributes to the substrate binding site.

Belongs to the metallo-dependent hydrolases superfamily. Adenosine and AMP deaminases family. Adenine deaminase type 2 subfamily. Requires Zn(2+) as cofactor.

It catalyses the reaction adenine + H2O + H(+) = hypoxanthine + NH4(+). Its function is as follows. Catalyzes the hydrolytic deamination of adenine to hypoxanthine. Plays an important role in the purine salvage pathway and in nitrogen catabolism. This chain is Adenine deaminase, found in Rhodopseudomonas palustris (strain BisB18).